We begin with the raw amino-acid sequence, 161 residues long: Anaerobic nitrite reductase Hb2 (161 aa).

The 150-residue stretch at 8–157 (GFSEEQEALV…LVDAIKSEMK (150 aa)) folds into the Globin domain. The short motif at 41 to 45 (EIAPS) is the Homodimerization element. The heme b site is built by serine 51, lysine 65, histidine 69, lysine 99, threonine 103, and histidine 104. The Homodimerization signature appears at 111-123 (NEHFEVTKFALLE).

This sequence belongs to the plant globin family. In terms of assembly, homodimer. It depends on heme b as a cofactor. As to expression, predominantly expressed in roots, cotyledons, stems and nodules (confined to some cells associated with the nitrogen-fixing Bradyrhizobium symbiont), and, to a lower extent, in flowers, young leaves, pods and seeds.

The protein localises to the cytoplasm. It is found in the nucleus. The enzyme catalyses Fe(III)-heme b-[protein] + nitric oxide + H2O = Fe(II)-heme b-[protein] + nitrite + 2 H(+). Functionally, phytoglobin that reduces nitrite to nitric oxide (NO) under anoxic conditions (e.g. during flooding or in waterlogged soil) and upon root nodulation. Required for general plant development and during nodulation, especially for the onset of symbiosis. Monitors nitric oxide (NO) levels during early phase of the nitrogen-fixing symbiosis and buffers oxygen in functioning nodules. May not function as an oxygen storage or transport protein. Has an unusually high affinity for O(2) through a hexacoordinate heme iron because of a very low dissociation constant. Involved in water stress tolerance. The chain is Anaerobic nitrite reductase Hb2 from Glycine max (Soybean).